The sequence spans 395 residues: Vomeronasal type-1 receptor 2 (395 aa).

Residues 12–32 (LYPINISAAWHLGPLPVSCFV) form a helical membrane-spanning segment. The Extracellular portion of the chain corresponds to 33–51 (SNKYQCSLAFGATTGLRVL). The helical transmembrane segment at 52–72 (VVVVPQTQLSFLSSLCLVSLF) threads the bilayer. Topologically, residues 73–93 (LHSLVSAHGEKPTKPVGLDPT) are cytoplasmic. The chain crosses the membrane as a helical span at residues 94–114 (LFQVVVGILGNFSLLYYYMFL). Over 115–170 (YFRGYKPRSTDLILRHLTVADSLVILSKRIPETMATFGLKHFDNYFGCKFLLYAHR) the chain is Extracellular. A helical transmembrane segment spans residues 171-191 (VGRGVSIGSTCLLSVFQVITI). The Cytoplasmic segment spans residues 192–208 (NPRNSRWAEMKVKAPTY). A helical membrane pass occupies residues 209 to 229 (IGLSNILCWAFHMLVNAIFPI). Topologically, residues 230–267 (YTTGKWSNNNITKKGDLGYCSAPLSDEVTKSVYAALTS) are extracellular. The N-linked (GlcNAc...) asparagine glycan is linked to Asn-239. The chain crosses the membrane as a helical span at residues 268–288 (FHDVLCLGLMLWASSSIVLVL). The Cytoplasmic segment spans residues 289-316 (YRHKQQVQHICRNNLYPNSSPGNRAIQS). A helical membrane pass occupies residues 317–337 (ILALVSTFALCYALSFITYVY). The Extracellular portion of the chain corresponds to 338–346 (LALFDNSSW). Asn-343 carries an N-linked (GlcNAc...) asparagine glycan. Residues 347-367 (WLVNTAALIIACFPTISPFVL) traverse the membrane as a helical segment. Residues 368-395 (MCRDPSRSRLCSICCRRNRRFFHDFRKM) lie on the Cytoplasmic side of the membrane.

Belongs to the G-protein coupled receptor 1 family.

It is found in the cell membrane. Functionally, putative pheromone receptor. The protein is Vomeronasal type-1 receptor 2 (VN1R2) of Homo sapiens (Human).